Consider the following 297-residue polypeptide: TGF-beta receptor type-2 (297 aa).

An N-terminal signal peptide occupies residues 1–23 (MGRGLLGGLWPLHVVLWTRIAST). At 24–166 (IPPHVPKSVN…NPDLLLVIFQ (143 aa)) the chain is on the extracellular side. 6 disulfide bridges follow: C51/C84, C54/C71, C61/C67, C77/C101, C121/C136, and C138/C143. N-linked (GlcNAc...) asparagine glycosylation is found at N70 and N94. Residues 167–187 (VTGVSLLPPLGIAIAVIITFY) traverse the membrane as a helical segment. Topologically, residues 188–297 (CYRVHRQQKL…KTEKDIFSDL (110 aa)) are cytoplasmic. Positions 244–297 (IELDTLVGKGRFAEVYKAKLRQNTSEQFETVAVKIFPYEEYASWKTEKDIFSDL) constitute a Protein kinase domain. ATP-binding positions include 250 to 258 (VGKGRFAEV) and K277.

Belongs to the protein kinase superfamily. TKL Ser/Thr protein kinase family. TGFB receptor subfamily. Homodimer. Heterohexamer; TGFB1, TGFB2 and TGFB3 homodimeric ligands assemble a functional receptor composed of two TGFBR1 and TGFBR2 heterodimers to form a ligand-receptor heterohexamer. The respective affinity of TGFRB1 and TGFRB2 for the ligands may modulate the kinetics of assembly of the receptor and may explain the different biological activities of TGFB1, TGFB2 and TGFB3. Component of a complex composed of TSC22D1 (via N-terminus), TGFBR1 and TGFBR2; the interaction between TSC22D1 and TGFBR1 is inhibited by SMAD7 and promoted by TGFB1. Interacts with DAXX. Interacts with DYNLT4. Interacts with ZFYVE9; ZFYVE9 recruits SMAD2 and SMAD3 to the TGF-beta receptor. Interacts with and is activated by SCUBE3; this interaction does not affect TGFB1-binding to TGFBR2. Interacts with VPS39; this interaction is independent of the receptor kinase activity and of the presence of TGF-beta. Interacts with CLU. The cofactor is Mg(2+). It depends on Mn(2+) as a cofactor. Phosphorylated on a Ser/Thr residue in the cytoplasmic domain.

The protein resides in the cell membrane. The protein localises to the membrane raft. It catalyses the reaction L-threonyl-[receptor-protein] + ATP = O-phospho-L-threonyl-[receptor-protein] + ADP + H(+). The catalysed reaction is L-seryl-[receptor-protein] + ATP = O-phospho-L-seryl-[receptor-protein] + ADP + H(+). Functionally, transmembrane serine/threonine kinase forming with the TGF-beta type I serine/threonine kinase receptor, TGFBR1, the non-promiscuous receptor for the TGF-beta cytokines TGFB1, TGFB2 and TGFB3. Transduces the TGFB1, TGFB2 and TGFB3 signal from the cell surface to the cytoplasm and is thus regulating a plethora of physiological and pathological processes including cell cycle arrest in epithelial and hematopoietic cells, control of mesenchymal cell proliferation and differentiation, wound healing, extracellular matrix production, immunosuppression and carcinogenesis. The formation of the receptor complex composed of 2 TGFBR1 and 2 TGFBR2 molecules symmetrically bound to the cytokine dimer results in the phosphorylation and the activation of TGFRB1 by the constitutively active TGFBR2. Activated TGFBR1 phosphorylates SMAD2 which dissociates from the receptor and interacts with SMAD4. The SMAD2-SMAD4 complex is subsequently translocated to the nucleus where it modulates the transcription of the TGF-beta-regulated genes. This constitutes the canonical SMAD-dependent TGF-beta signaling cascade. Also involved in non-canonical, SMAD-independent TGF-beta signaling pathways. This Sus scrofa (Pig) protein is TGF-beta receptor type-2 (TGFBR2).